Here is a 122-residue protein sequence, read N- to C-terminus: Large ribosomal subunit protein uL14 (122 aa).

The protein belongs to the universal ribosomal protein uL14 family. In terms of assembly, part of the 50S ribosomal subunit. Forms a cluster with proteins L3 and L19. In the 70S ribosome, L14 and L19 interact and together make contacts with the 16S rRNA in bridges B5 and B8.

Binds to 23S rRNA. Forms part of two intersubunit bridges in the 70S ribosome. The polypeptide is Large ribosomal subunit protein uL14 (Psychromonas ingrahamii (strain DSM 17664 / CCUG 51855 / 37)).